The primary structure comprises 434 residues: Angio-associated migratory cell protein (434 aa).

The interval 1–63 is disordered; the sequence is MESESESGAA…EEEEEEGNEE (63 aa). At Ser-20 the chain carries Phosphoserine. A compositionally biased stretch (acidic residues) spans 39–62; that stretch reads DPDDLAQEMEDVDFEEEEEEEGNE. 8 WD repeats span residues 89 to 129, 132 to 171, 173 to 212, 214 to 254, 258 to 299, 315 to 354, 356 to 395, and 398 to 433; these read LHSA…LLFE, GHKDSVTCAGFSHDSTLVATGDMSGLLKVWQVDTKEEVWS, EAGDLEWMEWHPRAPVLLAGTADGNTWMWKVPNGDCKTFQ, PNCP…HVLK, GHQG…GVFR, SESNSVESLGFCSVMPLAAVGYLDGTLAIYDLATQTLRHQ, QHQSGIVQLLWEAGTAVVYTCSLDGIVRLWDARTGRLLTD, and GHTAEILDFALSKDASLVVTTSGDHKAKVFCVQRPD.

In terms of tissue distribution, expressed in metastatic melanoma, liver, skin, kidney, heart, lung, lymph node, skeletal muscle and brain, and also in A2058 melanoma cells and activated T-cells (at protein level). Expressed in blood vessels. Strongly expressed in endothelial cells, cytotrophoblasts, and poorly differentiated. colon adenocarcinoma cells found in lymphatics.

The protein localises to the cell membrane. It is found in the cytoplasm. In terms of biological role, plays a role in angiogenesis and cell migration. In smooth muscle cell migration, may act through the RhoA pathway. The protein is Angio-associated migratory cell protein (AAMP) of Homo sapiens (Human).